A 108-amino-acid chain; its full sequence is UPF0166 protein MJ1524 (108 aa).

It belongs to the UPF0166 family.

The polypeptide is UPF0166 protein MJ1524 (Methanocaldococcus jannaschii (strain ATCC 43067 / DSM 2661 / JAL-1 / JCM 10045 / NBRC 100440) (Methanococcus jannaschii)).